A 269-amino-acid chain; its full sequence is MKITSISVQQKNKERYNIFIDEKYNFSVDEEVLARYQLMKGKVLTEAEIEEIKQADMVRKGLNKAINFLSHRVRSEKEIRDYLRKQEMEAFAIDEILKKLADMDYINDLEFAELYTKTQIKTTLKGPRTIERELVEKGLTREIITQVIEEYSDEAQLENATKQAIKIMKRNNKSAKKMLQQKIITDLIQKGYTSELAKVAATEATSELDVADEAEILQKQIEKTMRKNKRYKPSIAKQKTITSLMQKGFSYDTIQSYLTENEISFEEEE.

Belongs to the RecX family.

The protein resides in the cytoplasm. Functionally, modulates RecA activity. This is Regulatory protein RecX from Listeria monocytogenes serotype 4b (strain F2365).